Consider the following 379-residue polypeptide: Cytochrome b (379 aa).

4 helical membrane-spanning segments follow: residues Phe33 to Met53, Trp77 to Ile98, Trp113 to Leu133, and Phe178 to Leu198. The heme b site is built by His83 and His97. Heme b is bound by residues His182 and His196. His201 is an a ubiquinone binding site. 4 helical membrane passes run Tyr226 to Tyr246, Leu288 to His308, Ala320 to Gly340, and Tyr347 to Pro367.

Belongs to the cytochrome b family. As to quaternary structure, the cytochrome bc1 complex contains 3 respiratory subunits (MT-CYB, CYC1 and UQCRFS1), 2 core proteins (UQCRC1 and UQCRC2) and probably 6 low-molecular weight proteins. Heme b serves as cofactor.

The protein resides in the mitochondrion inner membrane. In terms of biological role, component of the ubiquinol-cytochrome c reductase complex (complex III or cytochrome b-c1 complex) that is part of the mitochondrial respiratory chain. The b-c1 complex mediates electron transfer from ubiquinol to cytochrome c. Contributes to the generation of a proton gradient across the mitochondrial membrane that is then used for ATP synthesis. This is Cytochrome b (mt-cyb) from Anguilla anguilla (European freshwater eel).